A 429-amino-acid chain; its full sequence is MFLKAVVLTLALVAVTGARAEVSADQVATVMWDYFSQLSSNAKEAVEHLQKSELTQQLNALFQDKLGEVNTYAGDLQKKLVPFATELHERLAKDSEKLKEEIRKELEEVRARLLPHANEVSQKIGENVRELQQRLEPYTDQLRTQVNTQTEQLRRQLTPYAQRMERVLRENADSLQTSLRPHADQLKAKIDQNVEELKERLTPYADEFKVKIDQTVEELRRSLAPYAQDAQEKLNHQLEGLAFQMKKNAEELKARISASAEELRQRLAPLAEDMRGNLRGNTEGLQKSLAELGGHLDRHVEEFRLRVEPYGENFNKALVQQMEQLRQKLGPHAGDVEGHLSFLEKDLRDKVNSFFSTFKEKESQDNTLSLPEPEQQREQQQEQQQEQEQEQQQQQEQQQQQEQQREQQQQEQQQEQQQEQVQMLAPLES.

The N-terminal stretch at 1–20 (MFLKAVVLTLALVAVTGARA) is a signal peptide. Tandem repeats lie at residues 33 to 54 (DYFSQLSSNAKEAVEHLQKSEL), 60 to 81 (ALFQDKLGEVNTYAGDLQKKLV), 82 to 103 (PFATELHERLAKDSEKLKEEIR), 115 to 136 (PHANEVSQKIGENVRELQQRLE), 137 to 158 (PYTDQLRTQVNTQTEQLRRQLT), 159 to 180 (PYAQRMERVLRENADSLQTSLR), 181 to 202 (PHADQLKAKIDQNVEELKERLT), 203 to 224 (PYADEFKVKIDQTVEELRRSLA), 225 to 246 (PYAQDAQEKLNHQLEGLAFQMK), 247 to 268 (KNAEELKARISASAEELRQRLA), 269 to 286 (PLAEDMRGNLRGNTEGLQ), 287 to 308 (KSLAELGGHLDRHVEEFRLRVE), and 309 to 330 (PYGENFNKALVQQMEQLRQKLG). Residues 33 to 330 (DYFSQLSSNA…QMEQLRQKLG (298 aa)) are 13 X 22 AA approximate tandem repeats. Residues 359–429 (KEKESQDNTL…QVQMLAPLES (71 aa)) form a disordered region. The span at 381-420 (QEQQQEQEQEQQQQQEQQQQQEQQREQQQQEQQQEQQQEQ) shows a compositional bias: low complexity.

Belongs to the apolipoprotein A1/A4/E family. Homodimer. Phosphorylation sites are present in the extracellular medium. As to expression, secreted in plasma.

The protein resides in the secreted. Its function is as follows. May have a role in chylomicrons and VLDL secretion and catabolism. Required for efficient activation of lipoprotein lipase by ApoC-II; potent activator of LCAT. Apoa-IV is a major component of HDL and chylomicrons. The sequence is that of Apolipoprotein A-IV (APOA4) from Macaca fascicularis (Crab-eating macaque).